The chain runs to 221 residues: Small ribosomal subunit protein uS3c (221 aa).

Positions Ile43–Ala121 constitute a KH type-2 domain.

This sequence belongs to the universal ribosomal protein uS3 family. Part of the 30S ribosomal subunit.

The protein localises to the plastid. It is found in the chloroplast. This Jasminum nudiflorum (Winter jasmine) protein is Small ribosomal subunit protein uS3c (rps3).